A 388-amino-acid chain; its full sequence is MNLHEYQAKQIFAQYRLPVSKGIVCHSLDDAVSAIHTLAGDTWAAKCQVHAGGRGKAGGVKLVRSEAEIREFCNQWLGQRLVTFQTDKNGQPVNTIYLEETCLIERELYLGAVIDRSSQKIVFMASNAGGMNIEDVAAQTPELIHKATIDPLTGAQAFQGRELAFKLGLSGDQIKQFAHLFVQLAKLFIEKDLALLEVNPLVLTKQGQLLCLDAKMVIDSNALYRHPELKALQDPSQEDAREADAAKWDLNYVALDGNIGCMVNGAGLAMGTMDIVKLHGGRPANFLDVGGGATKERVSEAFKLILSDQNVKAVLVNIFGGIVRCDLIAEGIIAAVNEVGINIPVIVRLEGTNAELGREILANSSLRLIAANTLTQAAQLAVKAAEGK.

Residues lysine 46, 53–55, glutamate 99, cysteine 102, and glutamate 107 each bind ATP; that span reads GRG. Residues asparagine 199 and aspartate 213 each coordinate Mg(2+). Substrate is bound by residues asparagine 264 and 321–323; that span reads GIV.

It belongs to the succinate/malate CoA ligase beta subunit family. Heterotetramer of two alpha and two beta subunits. The cofactor is Mg(2+).

It catalyses the reaction succinate + ATP + CoA = succinyl-CoA + ADP + phosphate. It carries out the reaction GTP + succinate + CoA = succinyl-CoA + GDP + phosphate. Its pathway is carbohydrate metabolism; tricarboxylic acid cycle; succinate from succinyl-CoA (ligase route): step 1/1. In terms of biological role, succinyl-CoA synthetase functions in the citric acid cycle (TCA), coupling the hydrolysis of succinyl-CoA to the synthesis of either ATP or GTP and thus represents the only step of substrate-level phosphorylation in the TCA. The beta subunit provides nucleotide specificity of the enzyme and binds the substrate succinate, while the binding sites for coenzyme A and phosphate are found in the alpha subunit. This Actinobacillus pleuropneumoniae serotype 7 (strain AP76) protein is Succinate--CoA ligase [ADP-forming] subunit beta.